We begin with the raw amino-acid sequence, 272 residues long: ATP phosphoribosyltransferase regulatory subunit (272 aa).

It belongs to the class-II aminoacyl-tRNA synthetase family. HisZ subfamily. In terms of assembly, heteromultimer composed of HisG and HisZ subunits.

It localises to the cytoplasm. It functions in the pathway amino-acid biosynthesis; L-histidine biosynthesis; L-histidine from 5-phospho-alpha-D-ribose 1-diphosphate: step 1/9. Functionally, required for the first step of histidine biosynthesis. May allow the feedback regulation of ATP phosphoribosyltransferase activity by histidine. This chain is ATP phosphoribosyltransferase regulatory subunit, found in Staphylococcus aureus (strain bovine RF122 / ET3-1).